The following is a 336-amino-acid chain: Biotin synthase (336 aa).

A Radical SAM core domain is found at G55–R288. [4Fe-4S] cluster is bound by residues C73, C77, and C80. 3 residues coordinate [2Fe-2S] cluster: C152, C213, and K283.

The protein belongs to the radical SAM superfamily. Biotin synthase family. As to quaternary structure, homodimer. The cofactor is [4Fe-4S] cluster. [2Fe-2S] cluster serves as cofactor.

It catalyses the reaction (4R,5S)-dethiobiotin + (sulfur carrier)-SH + 2 reduced [2Fe-2S]-[ferredoxin] + 2 S-adenosyl-L-methionine = (sulfur carrier)-H + biotin + 2 5'-deoxyadenosine + 2 L-methionine + 2 oxidized [2Fe-2S]-[ferredoxin]. Its pathway is cofactor biosynthesis; biotin biosynthesis; biotin from 7,8-diaminononanoate: step 2/2. In terms of biological role, catalyzes the conversion of dethiobiotin (DTB) to biotin by the insertion of a sulfur atom into dethiobiotin via a radical-based mechanism. The protein is Biotin synthase of Chlorobium limicola (strain DSM 245 / NBRC 103803 / 6330).